We begin with the raw amino-acid sequence, 795 residues long: Phenylalanine--tRNA ligase beta subunit (795 aa).

Residues 39 to 148 (AGQFHGVVVG…IDAPLGVDLR (110 aa)) enclose the tRNA-binding domain. The B5 domain occupies 401-476 (PQSATITLRR…RIYGYNNIPD (76 aa)). Positions 454, 460, 463, and 464 each coordinate Mg(2+). Residues 701–794 (SRFPSNRRDI…LKQRFQASLR (94 aa)) enclose the FDX-ACB domain.

The protein belongs to the phenylalanyl-tRNA synthetase beta subunit family. Type 1 subfamily. Tetramer of two alpha and two beta subunits. The cofactor is Mg(2+).

It is found in the cytoplasm. The catalysed reaction is tRNA(Phe) + L-phenylalanine + ATP = L-phenylalanyl-tRNA(Phe) + AMP + diphosphate + H(+). In Photorhabdus laumondii subsp. laumondii (strain DSM 15139 / CIP 105565 / TT01) (Photorhabdus luminescens subsp. laumondii), this protein is Phenylalanine--tRNA ligase beta subunit.